Consider the following 223-residue polypeptide: Protein-lysine N-methyltransferase CG9154 (223 aa).

The protein belongs to the class I-like SAM-binding methyltransferase superfamily. EFM5 family.

It localises to the cytoplasm. S-adenosyl-L-methionine-dependent protein-lysine N-methyltransferase that methylates elongation factor 1-alpha. This is Protein-lysine N-methyltransferase CG9154 from Drosophila melanogaster (Fruit fly).